Here is a 253-residue protein sequence, read N- to C-terminus: uncharacterized protein (253 aa).

Ala2 bears the N-acetylalanine mark.

Belongs to the NAD(P)-dependent epimerase/dehydratase family. Homodimer.

This is an uncharacterized protein from Arabidopsis thaliana (Mouse-ear cress).